The chain runs to 210 residues: Cell division protein SepF (210 aa).

The tract at residues glycine 13–methionine 78 is disordered. Residues tyrosine 22–aspartate 31 are compositionally biased toward acidic residues. Basic and acidic residues predominate over residues arginine 47–methionine 60. The segment covering valine 64–methionine 78 has biased composition (polar residues).

It belongs to the SepF family. Homodimer. Interacts with FtsZ.

It is found in the cytoplasm. Functionally, cell division protein that is part of the divisome complex and is recruited early to the Z-ring. Probably stimulates Z-ring formation, perhaps through the cross-linking of FtsZ protofilaments. Its function overlaps with FtsA. This chain is Cell division protein SepF, found in Cyanothece sp. (strain PCC 7425 / ATCC 29141).